A 327-amino-acid polypeptide reads, in one-letter code: Phenylalanine--tRNA ligase alpha subunit (327 aa).

E252 contacts Mg(2+).

It belongs to the class-II aminoacyl-tRNA synthetase family. Phe-tRNA synthetase alpha subunit type 1 subfamily. In terms of assembly, tetramer of two alpha and two beta subunits. The cofactor is Mg(2+).

The protein resides in the cytoplasm. It catalyses the reaction tRNA(Phe) + L-phenylalanine + ATP = L-phenylalanyl-tRNA(Phe) + AMP + diphosphate + H(+). In Yersinia pestis bv. Antiqua (strain Angola), this protein is Phenylalanine--tRNA ligase alpha subunit.